The following is a 284-amino-acid chain: Hydrogenase expression/formation protein HupQ (284 aa).

The disordered stretch occupies residues 1–23 (MIGTQSILPPGFGPGSHGEEDRL).

Belongs to the HupH/HyaF family.

The sequence is that of Hydrogenase expression/formation protein HupQ (hupQ) from Azotobacter chroococcum mcd 1.